A 72-amino-acid chain; its full sequence is Toxin Acra II-1 (72 aa).

One can recognise an LCN-type CS-alpha/beta domain in the interval 3-67 (VPGNYPLNTY…VWNAAKNYCK (65 aa)). 3 disulfides stabilise this stretch: cysteine 18–cysteine 41, cysteine 27–cysteine 46, and cysteine 31–cysteine 48.

Belongs to the long (3 C-C) scorpion toxin superfamily. Sodium channel inhibitor family. Beta subfamily. In terms of tissue distribution, expressed by the venom gland.

It is found in the secreted. Binds to sodium channels (Nav) and affects the channel activation process. The protein is Toxin Acra II-1 of Androctonus crassicauda (Arabian fat-tailed scorpion).